A 409-amino-acid polypeptide reads, in one-letter code: MIPGNRMLMVVLLCQVLLGGASHASLIPETGKKKVAEIQGHAGGRRSGQSHELLRDFEATLLQMFGLRRHPQPSKSAVIPDYMRDLYRLQSGEEEEEEQMPSGGLEYPERPASRANTVRSFHHEEHLENIPGTSENSAFRFLFNLSSIPENEAISSAELRLFREQVDQGPDWERGFHRINIYEVMKPPAEAVPGHLITRLLDTRLVHHNVTRWETFDVSPAVLRWTREKQPNHGLAVEVTHFHHTRTHQGQHVRLSRSLLQGSGDWAQFRPLLVTFGHDGRGHALTRRRRAKRSLKHHPQRARKKNKNCRRHALYVDFSDVGWNDWIVAPPGYQAFYCHGDCPFPLADHFNSTNHAIVQTLVNSVNSSIPKACCVPTELSAISMLYLDEYDKVVLKNYQEMVVEGCGCR.

Positions 1 to 19 (MIPGNRMLMVVLLCQVLLG) are cleaved as a signal peptide. The propeptide occupies 20-293 (GASHASLIPE…ALTRRRRAKR (274 aa)). S91 carries the phosphoserine modification. The disordered stretch occupies residues 91–110 (SGEEEEEEQMPSGGLEYPER). N-linked (GlcNAc...) asparagine glycans are attached at residues N144, N209, N351, and N366. 3 disulfides stabilise this stretch: C309/C374, C338/C406, and C342/C408.

Belongs to the TGF-beta family. In terms of assembly, homodimer; disulfide-linked. Interacts with GREM2. Part of a complex consisting of TWSG1 and CHRD. Interacts with the serine proteases, HTRA1 and HTRA3; the interaction with either inhibits BMP4-mediated signaling. The HTRA protease activity is required for this inhibition. Interacts with SOSTDC1. Interacts with FBN1 (via N-terminal domain) and FBN2. Interacts with type I receptor BMPR1A. Interacts with type II receptor BMPR2. Interacts with FSTL1; this interaction inhibits the activation of the BMP4/Smad1/5/8 signaling pathway. Interacts with SCUBE3. Interacts with TGFBR3.

Its subcellular location is the secreted. The protein localises to the extracellular space. It is found in the extracellular matrix. Functionally, growth factor of the TGF-beta superfamily that plays essential roles in many developmental processes, including neurogenesis, vascular development, angiogenesis and osteogenesis. Acts in concert with PTHLH/PTHRP to stimulate ductal outgrowth during embryonic mammary development and to inhibit hair follicle induction. Initiates the canonical BMP signaling cascade by associating with type I receptor BMPR1A and type II receptor BMPR2. Once all three components are bound together in a complex at the cell surface, BMPR2 phosphorylates and activates BMPR1A. In turn, BMPR1A propagates signal by phosphorylating SMAD1/5/8 that travel to the nucleus and act as activators and repressors of transcription of target genes. Positively regulates the expression of odontogenic development regulator MSX1 via inducing the IPO7-mediated import of SMAD1 to the nucleus. Required for MSX1-mediated mesenchymal molar tooth bud development beyond the bud stage, via promoting Wnt signaling. Acts as a positive regulator of odontoblast differentiation during mesenchymal tooth germ formation, expression is repressed during the bell stage by MSX1-mediated inhibition of CTNNB1 signaling. Able to induce its own expression in dental mesenchymal cells and also in the neighboring dental epithelial cells via an MSX1-mediated pathway. Can also signal through non-canonical BMP pathways such as ERK/MAP kinase, PI3K/Akt, or SRC cascades. For example, induces SRC phosphorylation which, in turn, activates VEGFR2, leading to an angiogenic response. This Oryctolagus cuniculus (Rabbit) protein is Bone morphogenetic protein 4 (BMP4).